An 87-amino-acid polypeptide reads, in one-letter code: Large ribosomal subunit protein bL31B (87 aa).

Belongs to the bacterial ribosomal protein bL31 family. Type B subfamily. As to quaternary structure, part of the 50S ribosomal subunit.

The sequence is that of Large ribosomal subunit protein bL31B from Klebsiella pneumoniae (strain 342).